Here is a 291-residue protein sequence, read N- to C-terminus: MGKDVPLLVASAPSLMAQAKEMMEGYTLKARKGLGQHFLISQGVLNKILAAADLKPTDTVIEVGPGLGVLTEELLKRAGQVIAVEVDDKLIDALTEKFKGYPNFRLIHSDILKTSPEEILGQNVPYKLVANLPYYITSAVLRQFLEAKLKPESMVVMVQKEVAKNIVAKTGDMGLLTLSIRFYGNPSLVSVVPGGAFYPPPEVDSAIVKIVIPQTTIMEGVSEVDFFKLARAGFGTRRKTLLNALAQGLGISKPVILSLLNGAGIDPARRAETLSMEEWKKLCLEYAGNPC.

Residues His-37, Leu-39, Gly-64, Glu-85, Asp-110, and Asn-131 each contribute to the S-adenosyl-L-methionine site.

The protein belongs to the class I-like SAM-binding methyltransferase superfamily. rRNA adenine N(6)-methyltransferase family. RsmA subfamily.

Its subcellular location is the cytoplasm. The enzyme catalyses adenosine(1518)/adenosine(1519) in 16S rRNA + 4 S-adenosyl-L-methionine = N(6)-dimethyladenosine(1518)/N(6)-dimethyladenosine(1519) in 16S rRNA + 4 S-adenosyl-L-homocysteine + 4 H(+). Its function is as follows. Specifically dimethylates two adjacent adenosines (A1518 and A1519) in the loop of a conserved hairpin near the 3'-end of 16S rRNA in the 30S particle. May play a critical role in biogenesis of 30S subunits. In Dehalococcoides mccartyi (strain ATCC BAA-2100 / JCM 16839 / KCTC 5957 / BAV1), this protein is Ribosomal RNA small subunit methyltransferase A.